Here is a 179-residue protein sequence, read N- to C-terminus: Large ribosomal subunit protein uL5 (179 aa).

Belongs to the universal ribosomal protein uL5 family. As to quaternary structure, part of the 50S ribosomal subunit; part of the 5S rRNA/L5/L18/L25 subcomplex. Contacts the 5S rRNA and the P site tRNA. Forms a bridge to the 30S subunit in the 70S ribosome.

Its function is as follows. This is one of the proteins that bind and probably mediate the attachment of the 5S RNA into the large ribosomal subunit, where it forms part of the central protuberance. In the 70S ribosome it contacts protein S13 of the 30S subunit (bridge B1b), connecting the 2 subunits; this bridge is implicated in subunit movement. Contacts the P site tRNA; the 5S rRNA and some of its associated proteins might help stabilize positioning of ribosome-bound tRNAs. The protein is Large ribosomal subunit protein uL5 of Burkholderia multivorans (strain ATCC 17616 / 249).